The sequence spans 1463 residues: Nitric oxide synthase 1 (1463 aa).

Positions 1 to 200 (MESHMFSVQQ…LQGSGENNKL (200 aa)) are interaction with NOSIP. Residues 17-99 (SVRLFKRKVG…ETHVVLILRG (83 aa)) enclose the PDZ domain. 3 disordered regions span residues 110 to 194 (TFTG…LQGS), 215 to 250 (GKAINGGGPAKTETKDVEVQVDRDPDSKSHKPLPLG), and 268 to 298 (VVLNNPYSEKEQPSASGKQSPTKNGSPSKCP). The DYNLL1/PIN/nNOS-inhibiting protein-binding stretch occupies residues 158–240 (PDPGQEASSL…VEVQVDRDPD (83 aa)). The segment covering 226–243 (TETKDVEVQVDRDPDSKS) has biased composition (basic and acidic residues). Positions 280 to 294 (PSASGKQSPTKNGSP) are enriched in polar residues. S334 serves as a coordination point for (6R)-L-erythro-5,6,7,8-tetrahydrobiopterin. C415 contributes to the heme b binding site. L-arginine is bound by residues Q478, W587, Y588, and E592. V677, W678, and F691 together coordinate (6R)-L-erythro-5,6,7,8-tetrahydrobiopterin. A heme b-binding site is contributed by Y706. The tract at residues 725–745 (KRRAIGFKKLAEAVKFSAKLM) is calmodulin-binding. The Flavodoxin-like domain maps to 755–969 (ATILYATETG…AFRTWAKKVF (215 aa)). FMN is bound by residues T761, E762, T763, K765, S766, S807, T808, and G812. 3 positions are modified to phosphoserine: S881, S891, and S892. FMN-binding residues include S920, H925, C927, E953, and Q957. One can recognise an FAD-binding FR-type domain in the interval 1024–1271 (KRVSAARLLS…VRGAPSFHLP (248 aa)). R1044 is a binding site for NADP(+). The FAD site is built by H1066, R1207, Y1208, Y1209, S1210, T1225, and A1227. An NADP(+)-binding site is contributed by S1230. Y1231, V1244, C1245, and S1246 together coordinate FAD. Residues T1285, R1318, S1347, R1348, K1354, Y1356, Q1358, D1391, T1432, and R1434 each contribute to the NADP(+) site.

This sequence belongs to the NOS family. Homodimer. Interacts with DLG4; the interaction possibly being prevented by the association between NOS1 and CAPON. Forms a ternary complex with CAPON and RASD1. Forms a ternary complex with CAPON and SYN1. Interacts with ZDHHC23. Interacts with NOSIP; which may impair its synaptic location. Interacts with HTR4. Interacts with SLC6A4. Interacts with VAC14. Interacts (via N-terminal domain) with DLG4 (via N-terminal tandem pair of PDZ domains). Interacts with SLC6A4. Forms a complex with ASL, ASS1 and SLC7A1; the complex regulates cell-autonomous L-arginine synthesis and citrulline recycling while channeling extracellular L-arginine to nitric oxide synthesis pathway. Interacts with DMD; localizes NOS1 to sarcolemma in muscle cells. Interacts with DYNLL1; inhibits the nitric oxide synthase activity. Heme b is required as a cofactor. Requires FAD as cofactor. The cofactor is FMN. It depends on (6R)-L-erythro-5,6,7,8-tetrahydrobiopterin as a cofactor. Ubiquitinated; mediated by STUB1/CHIP in the presence of Hsp70 and Hsp40 (in vitro).

It is found in the cell membrane. The protein resides in the sarcolemma. It localises to the cell projection. The protein localises to the dendritic spine. It carries out the reaction 2 L-arginine + 3 NADPH + 4 O2 + H(+) = 2 L-citrulline + 2 nitric oxide + 3 NADP(+) + 4 H2O. Its activity is regulated as follows. Stimulated by calcium/calmodulin. Inhibited by DYNLL1 that prevents the dimerization of the protein. Inhibited by NOSIP. Its function is as follows. Produces nitric oxide (NO) which is a messenger molecule with diverse functions throughout the body. In the brain and peripheral nervous system, NO displays many properties of a neurotransmitter. Probably has nitrosylase activity and mediates cysteine S-nitrosylation of cytoplasmic target proteins such SRR. The sequence is that of Nitric oxide synthase 1 (NOS1) from Ovis aries (Sheep).